Consider the following 586-residue polypeptide: Protein CBFA2T2 (586 aa).

The disordered stretch occupies residues 1–95; the sequence is MVGIPGPYQF…SSSSSLANQQ (95 aa). The span at 56 to 68 shows a compositional bias: polar residues; it reads SSHSNGINHSPPT. Low complexity predominate over residues 77–90; sequence QRSSNGPSSSSSSS. The TAFH domain maps to 102–197; the sequence is VRQLSKLKRF…TPSQYLAQHE (96 aa). 2 disordered regions span residues 204–242 and 387–417; these read STSSPADSSELLMEMNGNGKRHSPDRREEERETAPAEPP and IRKGSEHPSRQHSPSSTDSGASDSVRDFGSR. Residues 228–237 show a composition bias toward basic and acidic residues; the sequence is DRREEERETA. Over residues 399-409 the composition is skewed to low complexity; it reads SPSSTDSGASD. The stretch at 429 to 481 forms a coiled coil; it reads RKAEEAVNEVKRQAMSEVQKAVSEAEQKAFEMIASERARMEQTIVDAKRRAAE. Zn(2+) contacts are provided by cysteine 497, cysteine 500, cysteine 508, cysteine 511, cysteine 517, cysteine 521, histidine 529, and cysteine 533. An MYND-type zinc finger spans residues 497–533; sequence CWNCGRKASETCSGCNIARYCGSFCQHKDWEKHHRIC. The disordered stretch occupies residues 561–586; the sequence is SPTLERSSSATSRSSTPASVTAVDGL. Over residues 566–586 the composition is skewed to low complexity; sequence RSSSATSRSSTPASVTAVDGL.

The protein resides in the nucleus. Functionally, may act as a transcriptional corepressor. This Xenopus laevis (African clawed frog) protein is Protein CBFA2T2 (cbfa2t2).